The following is a 144-amino-acid chain: Transcription antitermination protein NusB (144 aa).

Belongs to the NusB family.

Functionally, involved in transcription antitermination. Required for transcription of ribosomal RNA (rRNA) genes. Binds specifically to the boxA antiterminator sequence of the ribosomal RNA (rrn) operons. The chain is Transcription antitermination protein NusB from Streptococcus thermophilus (strain CNRZ 1066).